We begin with the raw amino-acid sequence, 1980 residues long: Unconventional myosin-IXb (1980 aa).

S2 is subject to N-acetylserine. The Ras-associating domain maps to 15 to 114 (ATFHLHIYPQ…YYFLLQERNA (100 aa)). A Myosin motor domain is found at 146 to 954 (ADFDDLCNLP…ERQALQERLH (809 aa)). 239-246 (GESGSGKT) lines the ATP pocket. Residues 715–736 (GVSSPVTRSHVEELPRGANTPS) form a disordered region. Residues S717 and S718 each carry the phosphoserine modification. An actin-binding region spans residues 845–856 (KAEPFFIRCIRS). Residues 941-1045 (LKETERQALQ…CRGHLQRRSF (105 aa)) are neck or regulatory domain. IQ domains follow at residues 958–978 (LRRI…RHFV), 981–1001 (KHAA…RTLE), 1002–1024 (RTRA…AYHH), and 1025–1054 (QRHS…EKQK). S1046 is modified (phosphoserine). The tail stretch occupies residues 1046–1980 (SQMMLEKQKA…ERAVRGAAEE (935 aa)). 3 disordered regions span residues 1049–1281 (MLEK…HPDT), 1302–1380 (SQSL…QGDS), and 1394–1449 (DKKP…NRKV). Residues 1097-1106 (TWMNSKSPNG) are compositionally biased toward polar residues. A phosphoserine mark is found at S1108, S1115, and S1177. Composition is skewed to basic and acidic residues over residues 1129-1177 (ESHE…RKAS) and 1186-1195 (EDTKEPREDG). Phosphoserine is present on residues S1220, S1222, S1229, S1237, S1243, and S1247. Low complexity predominate over residues 1235–1247 (RVSPVLPSSSLES). The span at 1250 to 1265 (DEDKGENSTKVQDKPE) shows a compositional bias: basic and acidic residues. Phosphoserine occurs at positions 1266, 1268, and 1304. T1319 bears the Phosphothreonine mark. Phosphoserine is present on residues S1327, S1329, and S1337. Residues 1327 to 1344 (SFSTSDVSKLSPVKTSTE) show a composition bias toward polar residues. A Phorbol-ester/DAG-type zinc finger spans residues 1592 to 1641 (GHVFASYQVNIPQSCEQCLSYIWLMDKALLCSVCKMTCHKKCVHKIQSYC). Phosphoserine is present on S1649. A Rho-GAP domain is found at 1663-1848 (DSLTSDKASV…MLIKEQMRKY (186 aa)). The segment at 1699 to 1704 (AANRTR) is interaction with RHOA. A coiled-coil region spans residues 1841–1861 (IKEQMRKYKVKMEEINHLEAA). S1886 bears the Phosphoserine mark. Residues 1891–1923 (VRTKSPRTPVVQDLEELGALPEEAAGGDEDREK) are disordered. The stretch at 1918-1948 (DEDREKEILMERIQSIKEEKEDITYRLPELD) forms a coiled coil. Phosphoserine is present on residues S1932, S1952, and S1959. Positions 1937–1953 (KEDITYRLPELDPRGSD) are enriched in basic and acidic residues. The segment at 1937-1980 (KEDITYRLPELDPRGSDEENLDSETSASTESLLEERAVRGAAEE) is disordered. Position 1965 is a phosphothreonine (T1965). Residues 1969–1980 (LEERAVRGAAEE) are compositionally biased toward basic and acidic residues.

This sequence belongs to the TRAFAC class myosin-kinesin ATPase superfamily. Myosin family. As to quaternary structure, interacts (via IQ domains) with CALM. Interacts with RHOA. Interacts (via Rho-GAP domain) with ROBO1; this inhibits the interaction with RHOA and the stimulation of RHOA GTPase activity, and thereby increases the levels of active RHOA. As to expression, expressed in testis, lung, thymus, brain, liver, spleen and heart muscle. Detected in lung, testis, spleen and liver, and at reduced level in different brain regions (at protein level).

The protein resides in the cytoplasm. The protein localises to the cell cortex. It is found in the perinuclear region. Its subcellular location is the cytoskeleton. Its function is as follows. Myosins are actin-based motor molecules with ATPase activity. Unconventional myosins serve in intracellular movements. Binds actin with high affinity both in the absence and presence of ATP and its mechanochemical activity is inhibited by calcium ions. Also acts as a GTPase activator for RHOA. Plays a role in the regulation of cell migration via its role as RHOA GTPase activator. This is regulated by its interaction with the SLIT2 receptor ROBO1; interaction with ROBO1 impairs interaction with RHOA and subsequent activation of RHOA GTPase activity, and thereby leads to increased levels of active, GTP-bound RHOA. The chain is Unconventional myosin-IXb (Myo9b) from Rattus norvegicus (Rat).